A 156-amino-acid polypeptide reads, in one-letter code: Arginine repressor (156 aa).

Belongs to the ArgR family.

It is found in the cytoplasm. Its pathway is amino-acid biosynthesis; L-arginine biosynthesis [regulation]. Its function is as follows. Regulates arginine biosynthesis genes. The polypeptide is Arginine repressor (Vibrio vulnificus (strain CMCP6)).